A 356-amino-acid chain; its full sequence is Tyrosine recombinase XerS (356 aa).

One can recognise a Core-binding (CB) domain in the interval 16 to 121; the sequence is LMPWFVLEYY…ALSSLYKYLT (106 aa). In terms of domain architecture, Tyr recombinase spans 169–354; the sequence is KFLDYVENEY…VNDEQKNALD (186 aa). Residues arginine 210, lysine 234, histidine 306, arginine 309, and histidine 332 contribute to the active site. Tyrosine 341 functions as the O-(3'-phospho-DNA)-tyrosine intermediate in the catalytic mechanism.

It belongs to the 'phage' integrase family. XerS subfamily.

It is found in the cytoplasm. With respect to regulation, ftsK is required for recombination. Site-specific tyrosine recombinase, which acts by catalyzing the cutting and rejoining of the recombining DNA molecules. Essential to convert dimers of the bacterial chromosome into monomers to permit their segregation at cell division. The chain is Tyrosine recombinase XerS from Streptococcus thermophilus (strain ATCC BAA-491 / LMD-9).